A 46-amino-acid polypeptide reads, in one-letter code: Crambin (46 aa).

Cystine bridges form between C3–C40, C4–C32, and C16–C26.

The protein belongs to the plant thionin (TC 1.C.44) family.

It localises to the secreted. Functionally, the function of this hydrophobic plant seed protein is not known. This Crambe hispanica subsp. abyssinica (Abyssinian kale) protein is Crambin (THI2).